A 426-amino-acid polypeptide reads, in one-letter code: Serine--tRNA ligase (426 aa).

231 to 233 contacts L-serine; the sequence is TAE. 262-264 contributes to the ATP binding site; that stretch reads RSE. E285 serves as a coordination point for L-serine. Position 349–352 (349–352) interacts with ATP; the sequence is EISS. S385 contributes to the L-serine binding site.

The protein belongs to the class-II aminoacyl-tRNA synthetase family. Type-1 seryl-tRNA synthetase subfamily. In terms of assembly, homodimer. The tRNA molecule binds across the dimer.

Its subcellular location is the cytoplasm. It catalyses the reaction tRNA(Ser) + L-serine + ATP = L-seryl-tRNA(Ser) + AMP + diphosphate + H(+). It carries out the reaction tRNA(Sec) + L-serine + ATP = L-seryl-tRNA(Sec) + AMP + diphosphate + H(+). Its pathway is aminoacyl-tRNA biosynthesis; selenocysteinyl-tRNA(Sec) biosynthesis; L-seryl-tRNA(Sec) from L-serine and tRNA(Sec): step 1/1. Functionally, catalyzes the attachment of serine to tRNA(Ser). Is also able to aminoacylate tRNA(Sec) with serine, to form the misacylated tRNA L-seryl-tRNA(Sec), which will be further converted into selenocysteinyl-tRNA(Sec). The polypeptide is Serine--tRNA ligase (Brevibacillus brevis (strain 47 / JCM 6285 / NBRC 100599)).